The primary structure comprises 448 residues: Probable glycine dehydrogenase (decarboxylating) subunit 1 (448 aa).

The protein belongs to the GcvP family. N-terminal subunit subfamily. The glycine cleavage system is composed of four proteins: P, T, L and H. In this organism, the P 'protein' is a heterodimer of two subunits.

It carries out the reaction N(6)-[(R)-lipoyl]-L-lysyl-[glycine-cleavage complex H protein] + glycine + H(+) = N(6)-[(R)-S(8)-aminomethyldihydrolipoyl]-L-lysyl-[glycine-cleavage complex H protein] + CO2. In terms of biological role, the glycine cleavage system catalyzes the degradation of glycine. The P protein binds the alpha-amino group of glycine through its pyridoxal phosphate cofactor; CO(2) is released and the remaining methylamine moiety is then transferred to the lipoamide cofactor of the H protein. This chain is Probable glycine dehydrogenase (decarboxylating) subunit 1, found in Listeria monocytogenes serovar 1/2a (strain ATCC BAA-679 / EGD-e).